The following is a 589-amino-acid chain: Serine/threonine-protein phosphatase 2A 65 kDa regulatory subunit A alpha isoform (589 aa).

Position 2 is an N-acetylalanine (Ala-2). HEAT repeat units lie at residues 8–46, 47–84, 85–123, 124–161, 162–200, 201–239, 240–278, 279–321, 322–360, 361–399, 400–438, 439–477, 478–516, 517–555, and 556–589; these read DSLY…GVER, TRSE…GGPE, YVHC…SPSD, LEAH…VSSA, VKAE…ELDN, VKSE…PQED, LEAL…GPEI, TKTD…RENV, IMSQ…GKDN, TIEH…GIRQ, LSQS…GVEF, FDEK…GKEW, AHAT…GQDI, TTKH…DNST, and LQSE…LSLA. The PP2A subunit B binding stretch occupies residues 8–399; that stretch reads DSLYPIAVLI…CVNEVIGIRQ (392 aa). Positions 47 to 321 are polyoma small and medium T antigens Binding; the sequence is TRSELLPFLT…NLSADCRENV (275 aa). An SV40 small T antigen binding region spans residues 85-239; it reads YVHCLLPPLE…NIAQLLPQED (155 aa). Residue Lys-280 is modified to N6-acetyllysine. The interval 400–589 is PP2A subunit C binding; sequence LSQSLLPAIV…QEALTVLSLA (190 aa).

It belongs to the phosphatase 2A regulatory subunit A family. As to quaternary structure, PP2A consists of a common heterodimeric core enzyme, composed of PPP2CA a 36 kDa catalytic subunit (subunit C) and PPP2R1A a 65 kDa constant regulatory subunit (PR65 or subunit A), that associates with a variety of regulatory subunits. Proteins that associate with the core dimer include three families of regulatory subunits B (the R2/B/PR55/B55, R3/B''/PR72/PR130/PR59 and R5/B'/B56 families), the 48 kDa variable regulatory subunit, viral proteins, and cell signaling molecules. Found in a complex with at least ARL2, PPP2CB, PPP2R1A, PPP2R2A, PPP2R5E and TBCD. Interacts with the PP2A C catalytic subunit PPP2CA. Interacts with the PP2A B subunit PPP2R2A. Interacts with the PP2A B subunit PPP2R5D. Interacts with FOXO1; the interaction dephosphorylates FOXO1 on AKT-mediated phosphorylation sites. Interacts with IPO9. Interacts with TP53 and SGO1. Interacts with PLA2G16; this interaction might decrease PP2A activity. Interacts with CTTNBP2NL. Interacts with GNA12; the interaction promotes protein phosphatase 2A activation causing dephosphorylation of MAPT. Interacts with CIP2A; this interaction stabilizes CIP2A. Interacts with PABIR1/FAM122A. Interacts with ADCY8; antagonizes interaction between ADCY8 and calmodulin. Interacts with CRTC3 (when phosphorylated at 'Ser-391'). Interacts with SPRY2. Part of the core of STRIPAK complexes composed of PP2A catalytic and scaffolding subunits, the striatins (PP2A regulatory subunits), the striatin-associated proteins MOB4, STRIP1 and STRIP2, PDCD10 and members of the STE20 kinases, such as STK24 and STK26. Component of the Integrator-PP2A (INTAC) complex, composed of the Integrator core complex and protein phosphatase 2A subunits PPP2CA and PPP2R1A. (Microbial infection) Interacts with JC virus small t antigen; this interaction inhibits PPP2R1A activity.

It localises to the cytoplasm. It is found in the nucleus. Its subcellular location is the chromosome. The protein resides in the centromere. The protein localises to the lateral cell membrane. It localises to the cell projection. It is found in the dendrite. The PR65 subunit of protein phosphatase 2A serves as a scaffolding molecule to coordinate the assembly of the catalytic subunit and a variable regulatory B subunit. Upon interaction with GNA12 promotes dephosphorylation of microtubule associated protein TAU/MAPT. Required for proper chromosome segregation and for centromeric localization of SGO1 in mitosis. Together with RACK1 adapter, mediates dephosphorylation of AKT1 at 'Ser-473', preventing AKT1 activation and AKT-mTOR signaling pathway. Dephosphorylation of AKT1 is essential for regulatory T-cells (Treg) homeostasis and stability. Part of the striatin-interacting phosphatase and kinase (STRIPAK) complexes. STRIPAK complexes have critical roles in protein (de)phosphorylation and are regulators of multiple signaling pathways including Hippo, MAPK, nuclear receptor and cytoskeleton remodeling. Different types of STRIPAK complexes are involved in a variety of biological processes such as cell growth, differentiation, apoptosis, metabolism and immune regulation. Key mediator of a quality checkpoint during transcription elongation as part of the Integrator-PP2A (INTAC) complex. The INTAC complex drives premature transcription termination of transcripts that are unfavorably configured for transcriptional elongation: within the INTAC complex, acts as a scaffolding subunit for PPP2CA, which catalyzes dephosphorylation of the C-terminal domain (CTD) of Pol II subunit POLR2A/RPB1 and SUPT5H/SPT5, thereby preventing transcriptional elongation. Regulates the recruitment of the SKA complex to kinetochores. The protein is Serine/threonine-protein phosphatase 2A 65 kDa regulatory subunit A alpha isoform of Homo sapiens (Human).